The chain runs to 247 residues: Triosephosphate isomerase (247 aa).

8 to 10 (NWK) is a binding site for substrate. Histidine 94 functions as the Electrophile in the catalytic mechanism. Catalysis depends on glutamate 165, which acts as the Proton acceptor. Residues glycine 171 and serine 210 each coordinate substrate.

This sequence belongs to the triosephosphate isomerase family. Homodimer.

Its subcellular location is the cytoplasm. It carries out the reaction D-glyceraldehyde 3-phosphate = dihydroxyacetone phosphate. The protein operates within carbohydrate biosynthesis; gluconeogenesis. It participates in carbohydrate degradation; glycolysis; D-glyceraldehyde 3-phosphate from glycerone phosphate: step 1/1. In terms of biological role, involved in the gluconeogenesis. Catalyzes stereospecifically the conversion of dihydroxyacetone phosphate (DHAP) to D-glyceraldehyde-3-phosphate (G3P). In Aquifex aeolicus (strain VF5), this protein is Triosephosphate isomerase.